A 434-amino-acid chain; its full sequence is Pre-B-cell leukemia transcription factor 3 (434 aa).

The disordered stretch occupies residues 20–41; sequence SVQGGMALPPPPHGHEGADGDG. Residues 32–41 are compositionally biased toward basic and acidic residues; that stretch reads HGHEGADGDG. Residues 41–234 enclose the PBC domain; that stretch reads GRKQDIGDIL…VMILRSRFLD (194 aa). A PBC-A region spans residues 48-127; that stretch reads DILHQIMTIT…EGVSGPEKGG (80 aa). The segment at 130-234 is PBC-B; the sequence is AAAAAAAAAS…VMILRSRFLD (105 aa). Residues 235-297 constitute a DNA-binding region (homeobox; TALE-type); that stretch reads ARRKRRNFSK…NKRIRYKKNI (63 aa). Over residues 326-341 the composition is skewed to low complexity; the sequence is NQTNSPTTPNSGSSGS. Disordered stretches follow at residues 326-349 and 405-434; these read NQTN…NSGD and ANGG…DTSN. The segment covering 405–422 has biased composition (polar residues); it reads ANGGWQDATTPSSVTSPT.

Belongs to the TALE/PBX homeobox family. As to quaternary structure, interacts with PBXIP1.

Its subcellular location is the nucleus. Functionally, transcriptional activator that binds the sequence 5'-ATCAATCAA-3'. The protein is Pre-B-cell leukemia transcription factor 3 (Pbx3) of Mus musculus (Mouse).